We begin with the raw amino-acid sequence, 234 residues long: Leucyl/phenylalanyl-tRNA--protein transferase (234 aa).

This sequence belongs to the L/F-transferase family.

The protein resides in the cytoplasm. The enzyme catalyses N-terminal L-lysyl-[protein] + L-leucyl-tRNA(Leu) = N-terminal L-leucyl-L-lysyl-[protein] + tRNA(Leu) + H(+). The catalysed reaction is N-terminal L-arginyl-[protein] + L-leucyl-tRNA(Leu) = N-terminal L-leucyl-L-arginyl-[protein] + tRNA(Leu) + H(+). It catalyses the reaction L-phenylalanyl-tRNA(Phe) + an N-terminal L-alpha-aminoacyl-[protein] = an N-terminal L-phenylalanyl-L-alpha-aminoacyl-[protein] + tRNA(Phe). Functions in the N-end rule pathway of protein degradation where it conjugates Leu, Phe and, less efficiently, Met from aminoacyl-tRNAs to the N-termini of proteins containing an N-terminal arginine or lysine. In Salmonella agona (strain SL483), this protein is Leucyl/phenylalanyl-tRNA--protein transferase.